Here is a 440-residue protein sequence, read N- to C-terminus: Chromosomal replication initiator protein DnaA (440 aa).

The domain I, interacts with DnaA modulators stretch occupies residues 1 to 72; the sequence is MTELDSLWEA…KEFAQRELGR (72 aa). The tract at residues 72–103 is domain II; that stretch reads RNIEPHYVLEGEFTYTNKKTEDDPTPSFEMDT. The domain III, AAA+ region stretch occupies residues 104 to 320; it reads PLNPHYNFGT…GALTKVQAFA (217 aa). Positions 148, 150, 151, and 152 each coordinate ATP. The interval 321–440 is domain IV, binds dsDNA; it reads NLSGERITPS…ITKLKAKLRS (120 aa).

This sequence belongs to the DnaA family. In terms of assembly, oligomerizes as a right-handed, spiral filament on DNA at oriC.

It localises to the cytoplasm. In terms of biological role, plays an essential role in the initiation and regulation of chromosomal replication. ATP-DnaA binds to the origin of replication (oriC) to initiate formation of the DNA replication initiation complex once per cell cycle. Binds the DnaA box (a 9 base pair repeat at the origin) and separates the double-stranded (ds)DNA. Forms a right-handed helical filament on oriC DNA; dsDNA binds to the exterior of the filament while single-stranded (ss)DNA is stabiized in the filament's interior. The ATP-DnaA-oriC complex binds and stabilizes one strand of the AT-rich DNA unwinding element (DUE), permitting loading of DNA polymerase. After initiation quickly degrades to an ADP-DnaA complex that is not apt for DNA replication. Binds acidic phospholipids. The sequence is that of Chromosomal replication initiator protein DnaA from Limosilactobacillus reuteri (strain DSM 20016) (Lactobacillus reuteri).